The chain runs to 96 residues: Large ribosomal subunit protein bL27 (96 aa).

The segment at 13–33 (KGGGSTANGRNSAGRRLGAKA) is disordered.

The protein belongs to the bacterial ribosomal protein bL27 family.

The protein is Large ribosomal subunit protein bL27 of Lactobacillus acidophilus (strain ATCC 700396 / NCK56 / N2 / NCFM).